The following is a 397-amino-acid chain: Acetate kinase (397 aa).

Asn-8 contacts Mg(2+). Lys-15 contacts ATP. Residue Arg-89 participates in substrate binding. The Proton donor/acceptor role is filled by Asp-146. Residues 206-210 (HVGNG), 283-285 (DMR), and 331-335 (GMGEN) contribute to the ATP site. Residue Glu-383 participates in Mg(2+) binding.

The protein belongs to the acetokinase family. In terms of assembly, homodimer. It depends on Mg(2+) as a cofactor. Mn(2+) is required as a cofactor.

It is found in the cytoplasm. The catalysed reaction is acetate + ATP = acetyl phosphate + ADP. Its pathway is metabolic intermediate biosynthesis; acetyl-CoA biosynthesis; acetyl-CoA from acetate: step 1/2. Catalyzes the formation of acetyl phosphate from acetate and ATP. Can also catalyze the reverse reaction. In Streptococcus agalactiae serotype Ia (strain ATCC 27591 / A909 / CDC SS700), this protein is Acetate kinase.